Consider the following 519-residue polypeptide: Cytochrome P450 52E1 (519 aa).

2 consecutive transmembrane segments (helical) span residues 10–30 (ALGG…FYFI) and 44–64 (VIVF…TAML). Cysteine 479 serves as a coordination point for heme.

The protein belongs to the cytochrome P450 family. The cofactor is heme.

Its subcellular location is the membrane. Functionally, together with an NADPH cytochrome P450 the enzyme system catalyzes the terminal hydroxylation as the first step in the assimilation of alkanes and fatty acids. This chain is Cytochrome P450 52E1 (CYP52E1), found in Candida apicola (Yeast).